A 538-amino-acid polypeptide reads, in one-letter code: Syncytin-2 (538 aa).

The N-terminal stretch at 1-15 is a signal peptide; it reads MGLLLLVLILTPSLA. Residues 16 to 478 lie on the Extracellular side of the membrane; that stretch reads AYRHPDFPLL…GWLNWEGTWK (463 aa). Residues 43–46 carry the CXXC motif; it reads CWLC. Disulfide bonds link Cys-43-Cys-46, Cys-43-Cys-439, and Cys-431-Cys-438. N-linked (GlcNAc...) asparagine glycans are attached at residues Asn-133, Asn-146, Asn-177, Asn-220, Asn-241, Asn-247, Asn-312, and Asn-332. The interval 354–374 is fusion peptide; sequence FIPLLAGLGILAGTGTGIAGI. Residues 414–430 carry the CKS-17 motif; that stretch reads LQNRRGLDMLTAAQGGI. The short motif at 431–439 is the CX6CC element; it reads CLALDEKCC. N-linked (GlcNAc...) asparagine glycosylation is present at Asn-443. Residues 479–499 traverse the membrane as a helical segment; it reads WFSWVLPLTGPLVSLLLLLLF. Over 500 to 538 the chain is Cytoplasmic; it reads GPCLLNLITQFVSSRLQAIKLQTNLSAGRHPRNIQESPF.

Belongs to the gamma type-C retroviral envelope protein family. HERV class-I FRD env subfamily. As to quaternary structure, the surface and transmembrane proteins form a heterodimer. They are attached by non-covalent interactions or by a labile interchain disulfide bond. Interacts with MFSD2A. In terms of processing, specific enzymatic cleavages in vivo yield the mature SU and TM proteins. Post-translationally, the CXXC motif is highly conserved across a broad range of retroviral envelope proteins. It is thought to participate in the formation of a labile disulfide bond possibly with the CX6CC motif present in the transmembrane protein. Isomerization of the intersubunit disulfide bond to an SU intrachain disulfide bond is thought to occur upon receptor recognition in order to allow membrane fusion. In terms of tissue distribution, expressed at higher level in placenta. Expressed at lower level in adrenal, bone marrow, brain, breast, colon, kidney, lung, ovary, peripheral blood lymphocytes, prostate, skin, spleen, testis, thymus, thyroid, trachea.

The protein resides in the virion. The protein localises to the cell membrane. This endogenous retroviral envelope protein has retained its original fusogenic properties and participates in trophoblast fusion and the formation of a syncytium during placenta morphogenesis. The interaction with MFSD2A is apparently important for this process. Its function is as follows. Endogenous envelope proteins may have kept, lost or modified their original function during evolution but this one can still make pseudotypes with MLV, HIV-1 or SIV-1 virions and confer infectivity. Retroviral envelope proteins mediate receptor recognition and membrane fusion during early infection. The surface protein mediates receptor recognition, while the transmembrane protein anchors the envelope heterodimer to the viral membrane through one transmembrane domain. The other hydrophobic domain, called fusion peptide, mediates fusion of the viral membrane with the target cell membrane. The protein is Syncytin-2 (ERVFRD-1) of Homo sapiens (Human).